Consider the following 246-residue polypeptide: Acetylglutamate kinase (246 aa).

Substrate contacts are provided by residues 30–31 (GG), R52, and N151.

The protein belongs to the acetylglutamate kinase family. ArgB subfamily.

Its subcellular location is the cytoplasm. The catalysed reaction is N-acetyl-L-glutamate + ATP = N-acetyl-L-glutamyl 5-phosphate + ADP. Its pathway is amino-acid biosynthesis; L-arginine biosynthesis; N(2)-acetyl-L-ornithine from L-glutamate: step 2/4. In terms of biological role, catalyzes the ATP-dependent phosphorylation of N-acetyl-L-glutamate. The polypeptide is Acetylglutamate kinase (Methanopyrus kandleri (strain AV19 / DSM 6324 / JCM 9639 / NBRC 100938)).